A 1171-amino-acid chain; its full sequence is MASSSSSGSSTRSSSPSDPPSSFFQKLGAFLGLFSKPQPPRPDYPHAPGNSAREEQTDITEDIQKLGFKDVETLLLYLNSSVKGVNDDKQLLLERLIQLLSKLPPTSTNGKKVTDGLITGLWESLDHPPVSSLGEKYRFREADGSNNNIHNPTLGVAGSHYARSAKPMVYQNPNPPAPETIFDTLMARDPAKFRPHPNQISSVLFYFATIITHDIFQTSSRDPSINLTSSYLDLSPLYGRNLEEQLSVRAMKDGLLKPDTFCSKRVHGFPPGVGVLLIMFNRFHNYVVTSLAKINEGNRFKKPVGDDTAAWEKYDNDLFQTGRLITCGLYVNIVLVDYVRTILNLNRVDSSWILDPRTEEGKSLLSKPTPEAVGNQVSVEFNLIYRWHCGMSQRDDKWTTDMLTEALGGKDPATATLPEFFGALGRFESSFPNEPEKRTLAGLKRQEDGSFEDEGLIKIMQESIEEVAGAFGPNHVPACMRAIEILGMNQARSWNVATLNEFREFIGLKRYDTFEDINPDPKVANLLAEFYGSPDAVELYPGINAEAPKPVIVPGSGLCPPSTTGRAILSDAVTLVRGDRFFTVDYTPRNLTNFGYQEAATDKSVDNGNVIYKLFFRAFPNHYAQNSIYAHFPFVIPSENKKIMESLGLADKYSWQPPQRKPATQMIRSHAAAVKILNNQKDFKVVWGESIGFLTKFPTGENPGLGFALAGDAPANQQSRDQLMKCIFSPKAWEDEVRQFCEATTWDLLRRYSAKVQDKGPHLKVHTHEIDVIRDVISLANARFFAAVYSLPLKTENGDDGVYSDHEMYRSLMLIFSAIFWDNDVSKSFKLRRDARAATQKLGALVEKHIVEMGSLFHSFKHSHSAVSDKTNGLANGGANGHANGNANGHTNGNGIHQNGGAAPSMLRSYGDLMLRRMIEAYGEGKSVKEAVYGQIMPSIAAGTANQTQIMAQCLDYYMSDDGAEHLPEMKRLASLETPEAFNTLMKYLFEGARIRNTTAVPRLVATDQTVEDNIPCLPDPKDSTFLRPIPNPQQAETTRTVKLSRGSMVLVDLTVAAHDATAFPDPEKVRLDRDLDSYTFFGLGPHRCAGDKVVRITMTAVFKVLLQLDGLRRAEGGRGVFKSLPASQWNGQAGRVAGEKPQWSGLRTYVNADESAFSQTPMNMKIRWDD.

Low complexity predominate over residues 1–22 (MASSSSSGSSTRSSSPSDPPSS). Residues 1–56 (MASSSSSGSSTRSSSPSDPPSSFFQKLGAFLGLFSKPQPPRPDYPHAPGNSAREEQ) form a disordered region. The fatty acid alpha-dioxygenase stretch occupies residues 114 to 457 (TDGLITGLWE…DGSFEDEGLI (344 aa)). His-213 contributes to the heme b binding site. Positions 214, 229, 231, 233, and 235 each coordinate Ca(2+). The active site involves Tyr-385. His-388 lines the heme b pocket. The epoxy alcohol synthase stretch occupies residues 675-1171 (KILNNQKDFK…PMNMKIRWDD (497 aa)). The segment at 873 to 900 (GLANGGANGHANGNANGHTNGNGIHQNG) is disordered. Low complexity predominate over residues 881 to 895 (GHANGNANGHTNGNG). Cys-1089 contacts heme.

It in the N-terminal section; belongs to the peroxidase family. This sequence in the C-terminal section; belongs to the cytochrome P450 family. As to quaternary structure, homotetramer. It depends on heme b as a cofactor. Ca(2+) is required as a cofactor. Requires heme as cofactor.

The enzyme catalyses (9Z,12Z)-octadecadienoate + O2 = (8R,9Z,12Z)-8-hydroperoxyoctadeca-9,12-dienoate. It catalyses the reaction (8R,9Z,12Z)-8-hydroperoxyoctadeca-9,12-dienoate = (7S,8S,9Z,12Z)-7,8-dihydroxyoctadeca-9,12-dienoate. In terms of biological role, 7,8-linoleate diol synthase is a bifunctional enzyme that converts linoleic acid (18:2n-6) into 8-hydroperoxy-8(E),12(Z)-octadecadienoic acid (8-HPODE) and then catalyzes the isomerization of the resulting hydroperoxide to 7,8-dihydroxy-9(Z),12(Z)-octadecadienoic acid (7,8-DiHODE). In Pyricularia oryzae (strain 70-15 / ATCC MYA-4617 / FGSC 8958) (Rice blast fungus), this protein is 7,8-linoleate diol synthase.